Consider the following 855-residue polypeptide: E3 ubiquitin-protein ligase TRIM71 (855 aa).

Ala-2 carries the post-translational modification N-acetylalanine. The segment at 12 to 94 (CLLCKEMCGS…ALKLRCPVCD (83 aa)) adopts an RING-type zinc-finger fold. Residues 26–42 (SSNSSASSSSSQTSTSS) show a composition bias toward low complexity. 2 disordered regions span residues 26–48 (SSNS…GGGP) and 127–177 (EEPP…SPGS). The span at 135–145 (RAGGGPGGAGG) shows a compositional bias: gly residues. A compositionally biased stretch (basic residues) spans 147–157 (SNHRHHAHHPA). The segment at 181–228 (RRPHGCSSCDEGNAASSRCLDCQEHLCDNCVRAHQRVRLTKDHYIERG) adopts a B box-type 1; atypical zinc-finger fold. The B box-type 2 zinc-finger motif lies at 260–301 (ERLGFCQHHDDEVLHLYCDTCSVPICRECTLGRHGGHSFAYL). Zn(2+)-binding residues include Cys-265, His-268, Cys-288, and His-293. Coiled-coil stretches lie at residues 314–352 (QLLA…SEVK) and 378–411 (QVKA…VLEE). Residues 466-567 (SSGAFAPLTK…IENSPFKVVV (102 aa)) form a Filamin repeat. NHL repeat units follow at residues 580–623 (GLSF…FKPC), 627–670 (HHKF…FTFE), 674–717 (LLKF…FGPD), 721–764 (LNKY…IHPD), 768–811 (ARFL…FEAN), and 815–855 (LCKF…ILIF).

The protein belongs to the TRIM/RBCC family. In terms of assembly, interacts (via NHL repeats) with AGO2; the interaction increases in presence of RNA. Interacts with HSP90AA1. Interacts (via NHL repeats) with MOV10, PABPC1, PUM1, PUM2, STAU2, XRN1 and XRN2 in an RNA-dependent manner. Interacts with SHCBP1; leading to enhance its stability. Post-translationally, autoubiquitinated. Highly expressed in undifferentiated embryonic stem cells (ESCs). Expressed in the epiblast and in interfollicular epidermal stem cells during early development. Also expressed in male germ cells and in the reproductive tract. Highly expressed in neuroepithelial cells, and its expression declines as neurogenesis proceeds (at protein level). Expressed in ependymal cells of the brain.

The protein localises to the cytoplasm. It is found in the P-body. The enzyme catalyses S-ubiquitinyl-[E2 ubiquitin-conjugating enzyme]-L-cysteine + [acceptor protein]-L-lysine = [E2 ubiquitin-conjugating enzyme]-L-cysteine + N(6)-ubiquitinyl-[acceptor protein]-L-lysine.. The protein operates within protein modification; protein ubiquitination. Functionally, E3 ubiquitin-protein ligase that cooperates with the microRNAs (miRNAs) machinery and promotes embryonic stem cells proliferation and maintenance. Binds to miRNAs and associates with AGO2, participating in post-transcriptional repression of transcripts such as CDKN1A. Facilitates the G1-S transition to promote rapid embryonic stem cell self-renewal by repressing CDKN1A expression. In addition, participates in post-transcriptional mRNA repression in a miRNA independent mechanism. Required to maintain proliferation and prevent premature differentiation of neural progenitor cells during early neural development: positively regulates FGF signaling by controlling the stability of SHCBP1. Specific regulator of miRNA biogenesis. miRNA Binds MIR29A hairpin and postranscriptionally modulates MIR29A levels, which indirectly regulates TET proteins expression. This is E3 ubiquitin-protein ligase TRIM71 (Trim71) from Mus musculus (Mouse).